Consider the following 439-residue polypeptide: Hemagglutinin-esterase (439 aa).

Residues 1–22 (MGSMCIAMAPRTLLLLIGCQLA) form the signal peptide. Positions 12–132 (TLLLLIGCQL…DNKRWMGNKA (121 aa)) are esterase domain 1. The Virion surface portion of the chain corresponds to 23 to 407 (LGFNEPLNVV…PVCLYDPLPV (385 aa)). The active-site Nucleophile is the Ser-45. A disulfide bridge links Cys-49 with Cys-70. N-linked (GlcNAc...) asparagine; by host glycans are attached at residues Asn-94, Asn-152, Asn-196, Asn-246, and Asn-316. The cysteines at positions 118 and 167 are disulfide-linked. The receptor binding stretch occupies residues 133-281 (RFYALVYKKM…GNYKAVSLEY (149 aa)). Cystine bridges form between Cys-202–Cys-291 and Cys-210–Cys-264. The esterase domain 2 stretch occupies residues 282–395 (LLTIPSKAIC…QCPTAANIEF (114 aa)). A disulfide bridge links Cys-322 with Cys-327. 2 N-linked (GlcNAc...) asparagine; by host glycosylation sites follow: Asn-331 and Asn-337. Active-site charge relay system residues include Asp-342 and His-345. Asn-360 and Asn-374 each carry an N-linked (GlcNAc...) asparagine; by host glycan. An intrachain disulfide couples Cys-363 to Cys-387. The chain crosses the membrane as a helical span at residues 408-428 (ILLGVLLGIAVLIIVFLLFYF). Topologically, residues 429-439 (MTDSGVRLHEA) are intravirion.

This sequence belongs to the influenza type C/coronaviruses hemagglutinin-esterase family. In terms of assembly, homodimer; disulfide-linked. Forms a complex with the M protein in the pre-Golgi. Associates then with S-M complex to form a ternary complex S-M-HE. N-glycosylated in the host RER.

Its subcellular location is the virion membrane. The protein localises to the host cell membrane. The enzyme catalyses N-acetyl-9-O-acetylneuraminate + H2O = N-acetylneuraminate + acetate + H(+). It catalyses the reaction N-acetyl-4-O-acetylneuraminate + H2O = N-acetylneuraminate + acetate + H(+). Its function is as follows. Structural protein that makes short spikes at the surface of the virus. Contains receptor binding and receptor-destroying activities. Mediates de-O-acetylation of N-acetyl-4-O-acetylneuraminic acid, which is probably the receptor determinant recognized by the virus on the surface of erythrocytes and susceptible cells. This receptor-destroying activity is important for virus release as it probably helps preventing self-aggregation and ensures the efficient spread of the progeny virus from cell to cell. May serve as a secondary viral attachment protein for initiating infection, the spike protein being the major one. May become a target for both the humoral and the cellular branches of the immune system. The sequence is that of Hemagglutinin-esterase from Puffinosis coronavirus (PV).